The sequence spans 196 residues: Holliday junction branch migration complex subunit RuvA (196 aa).

A domain I region spans residues 1–63 (MISFVSGRVA…EDSLTLYGFA (63 aa)). Residues 64 to 136 (DDDERTVFEL…LKDRLGTPST (73 aa)) are domain II. The interval 136-140 (TAAAE) is flexible linker. The domain III stretch occupies residues 141-196 (STSGWRDAVHAGLLNLGYTARQADEAIAAIAGELDDSAAVDTATALRLALATLKRP).

Belongs to the RuvA family. As to quaternary structure, homotetramer. Forms an RuvA(8)-RuvB(12)-Holliday junction (HJ) complex. HJ DNA is sandwiched between 2 RuvA tetramers; dsDNA enters through RuvA and exits via RuvB. An RuvB hexamer assembles on each DNA strand where it exits the tetramer. Each RuvB hexamer is contacted by two RuvA subunits (via domain III) on 2 adjacent RuvB subunits; this complex drives branch migration. In the full resolvosome a probable DNA-RuvA(4)-RuvB(12)-RuvC(2) complex forms which resolves the HJ.

It is found in the cytoplasm. Its function is as follows. The RuvA-RuvB-RuvC complex processes Holliday junction (HJ) DNA during genetic recombination and DNA repair, while the RuvA-RuvB complex plays an important role in the rescue of blocked DNA replication forks via replication fork reversal (RFR). RuvA specifically binds to HJ cruciform DNA, conferring on it an open structure. The RuvB hexamer acts as an ATP-dependent pump, pulling dsDNA into and through the RuvAB complex. HJ branch migration allows RuvC to scan DNA until it finds its consensus sequence, where it cleaves and resolves the cruciform DNA. The sequence is that of Holliday junction branch migration complex subunit RuvA from Acidothermus cellulolyticus (strain ATCC 43068 / DSM 8971 / 11B).